Reading from the N-terminus, the 243-residue chain is Carboxy-S-adenosyl-L-methionine synthase (243 aa).

S-adenosyl-L-methionine contacts are provided by residues Tyr-39, 64 to 66, 89 to 90, 117 to 118, Asn-132, and Arg-199; these read GCS, DN, and DL.

Belongs to the class I-like SAM-binding methyltransferase superfamily. Cx-SAM synthase family. As to quaternary structure, homodimer.

It carries out the reaction prephenate + S-adenosyl-L-methionine = carboxy-S-adenosyl-L-methionine + 3-phenylpyruvate + H2O. Functionally, catalyzes the conversion of S-adenosyl-L-methionine (SAM) to carboxy-S-adenosyl-L-methionine (Cx-SAM). This is Carboxy-S-adenosyl-L-methionine synthase from Pseudoalteromonas atlantica (strain T6c / ATCC BAA-1087).